Reading from the N-terminus, the 215-residue chain is Nucleoside triphosphate pyrophosphatase (215 aa).

The Proton acceptor role is filled by Asp-80.

It belongs to the Maf family. Requires a divalent metal cation as cofactor.

It is found in the cytoplasm. It catalyses the reaction a ribonucleoside 5'-triphosphate + H2O = a ribonucleoside 5'-phosphate + diphosphate + H(+). The catalysed reaction is a 2'-deoxyribonucleoside 5'-triphosphate + H2O = a 2'-deoxyribonucleoside 5'-phosphate + diphosphate + H(+). In terms of biological role, nucleoside triphosphate pyrophosphatase. May have a dual role in cell division arrest and in preventing the incorporation of modified nucleotides into cellular nucleic acids. The protein is Nucleoside triphosphate pyrophosphatase of Leifsonia xyli subsp. xyli (strain CTCB07).